The sequence spans 174 residues: Methylated-DNA--protein-cysteine methyltransferase (174 aa).

The active-site Nucleophile; methyl group acceptor is the Cys-141.

This sequence belongs to the MGMT family.

The protein localises to the cytoplasm. The enzyme catalyses a 6-O-methyl-2'-deoxyguanosine in DNA + L-cysteinyl-[protein] = S-methyl-L-cysteinyl-[protein] + a 2'-deoxyguanosine in DNA. It carries out the reaction a 4-O-methyl-thymidine in DNA + L-cysteinyl-[protein] = a thymidine in DNA + S-methyl-L-cysteinyl-[protein]. In terms of biological role, involved in the cellular defense against the biological effects of O6-methylguanine (O6-MeG) and O4-methylthymine (O4-MeT) in DNA. Repairs the methylated nucleobase in DNA by stoichiometrically transferring the methyl group to a cysteine residue in the enzyme. This is a suicide reaction: the enzyme is irreversibly inactivated. In Thermococcus kodakarensis (strain ATCC BAA-918 / JCM 12380 / KOD1) (Pyrococcus kodakaraensis (strain KOD1)), this protein is Methylated-DNA--protein-cysteine methyltransferase.